A 196-amino-acid polypeptide reads, in one-letter code: Phosphoheptose isomerase (196 aa).

The region spanning 36 to 195 (VIQAYKLGKK…EKELFGEKVD (160 aa)) is the SIS domain. Residue 51 to 53 (NGG) coordinates substrate. Residues His-60 and Glu-64 each contribute to the Zn(2+) site. Substrate contacts are provided by residues Glu-64, 93 to 94 (ND), 119 to 121 (STS), Ser-124, and Gln-171. 2 residues coordinate Zn(2+): Gln-171 and His-179.

This sequence belongs to the SIS family. GmhA subfamily. Zn(2+) serves as cofactor.

Its subcellular location is the cytoplasm. The enzyme catalyses 2 D-sedoheptulose 7-phosphate = D-glycero-alpha-D-manno-heptose 7-phosphate + D-glycero-beta-D-manno-heptose 7-phosphate. It participates in carbohydrate biosynthesis; D-glycero-D-manno-heptose 7-phosphate biosynthesis; D-glycero-alpha-D-manno-heptose 7-phosphate and D-glycero-beta-D-manno-heptose 7-phosphate from sedoheptulose 7-phosphate: step 1/1. Its function is as follows. Catalyzes the isomerization of sedoheptulose 7-phosphate in D-glycero-D-manno-heptose 7-phosphate. This Clostridium acetobutylicum (strain ATCC 824 / DSM 792 / JCM 1419 / IAM 19013 / LMG 5710 / NBRC 13948 / NRRL B-527 / VKM B-1787 / 2291 / W) protein is Phosphoheptose isomerase.